A 303-amino-acid chain; its full sequence is Hydroxyethylthiazole kinase (303 aa).

Residues 1–15 are compositionally biased toward polar residues; the sequence is MTTASTTPNSDTSNL. The interval 1–23 is disordered; the sequence is MTTASTTPNSDTSNLHEVAPDDP. Met67 contributes to the substrate binding site. Arg142 and Ser206 together coordinate ATP. Position 233 (Gly233) interacts with substrate.

Belongs to the Thz kinase family. Mg(2+) serves as cofactor.

The enzyme catalyses 5-(2-hydroxyethyl)-4-methylthiazole + ATP = 4-methyl-5-(2-phosphooxyethyl)-thiazole + ADP + H(+). The protein operates within cofactor biosynthesis; thiamine diphosphate biosynthesis; 4-methyl-5-(2-phosphoethyl)-thiazole from 5-(2-hydroxyethyl)-4-methylthiazole: step 1/1. Catalyzes the phosphorylation of the hydroxyl group of 4-methyl-5-beta-hydroxyethylthiazole (THZ). The protein is Hydroxyethylthiazole kinase of Bifidobacterium animalis subsp. lactis (strain AD011).